Reading from the N-terminus, the 236-residue chain is Purine nucleoside phosphorylase DeoD-type (236 aa).

Histidine 5 provides a ligand contact to a purine D-ribonucleoside. Phosphate contacts are provided by residues glycine 21, arginine 25, arginine 44, and 88–91; that span reads RVGT. A purine D-ribonucleoside is bound by residues 180–182 and 204–205; these read EME and SD. The active-site Proton donor is the aspartate 205.

It belongs to the PNP/UDP phosphorylase family. As to quaternary structure, homohexamer; trimer of homodimers.

The enzyme catalyses a purine D-ribonucleoside + phosphate = a purine nucleobase + alpha-D-ribose 1-phosphate. It catalyses the reaction a purine 2'-deoxy-D-ribonucleoside + phosphate = a purine nucleobase + 2-deoxy-alpha-D-ribose 1-phosphate. Catalyzes the reversible phosphorolytic breakdown of the N-glycosidic bond in the beta-(deoxy)ribonucleoside molecules, with the formation of the corresponding free purine bases and pentose-1-phosphate. The chain is Purine nucleoside phosphorylase DeoD-type from Shewanella sp. (strain MR-4).